A 331-amino-acid chain; its full sequence is Ketol-acid reductoisomerase (NADP(+)) (331 aa).

The region spanning 2 to 182 is the KARI N-terminal Rossmann domain; that stretch reads AKIYTDKDAS…GATRAGVIET (181 aa). NADP(+) is bound by residues 25-28, R48, S53, and 83-86; these read YGIQ and DMEQ. H108 is an active-site residue. G134 is an NADP(+) binding site. The KARI C-terminal knotted domain occupies 183-328; it reads TFAEETETDL…AEMRKLLFGR (146 aa). Positions 191, 195, 227, and 231 each coordinate Mg(2+). Residue S252 coordinates substrate.

This sequence belongs to the ketol-acid reductoisomerase family. Mg(2+) is required as a cofactor.

The catalysed reaction is (2R)-2,3-dihydroxy-3-methylbutanoate + NADP(+) = (2S)-2-acetolactate + NADPH + H(+). It catalyses the reaction (2R,3R)-2,3-dihydroxy-3-methylpentanoate + NADP(+) = (S)-2-ethyl-2-hydroxy-3-oxobutanoate + NADPH + H(+). The protein operates within amino-acid biosynthesis; L-isoleucine biosynthesis; L-isoleucine from 2-oxobutanoate: step 2/4. Its pathway is amino-acid biosynthesis; L-valine biosynthesis; L-valine from pyruvate: step 2/4. Functionally, involved in the biosynthesis of branched-chain amino acids (BCAA). Catalyzes an alkyl-migration followed by a ketol-acid reduction of (S)-2-acetolactate (S2AL) to yield (R)-2,3-dihydroxy-isovalerate. In the isomerase reaction, S2AL is rearranged via a Mg-dependent methyl migration to produce 3-hydroxy-3-methyl-2-ketobutyrate (HMKB). In the reductase reaction, this 2-ketoacid undergoes a metal-dependent reduction by NADPH to yield (R)-2,3-dihydroxy-isovalerate. This chain is Ketol-acid reductoisomerase (NADP(+)), found in Pyrobaculum islandicum (strain DSM 4184 / JCM 9189 / GEO3).